Here is a 491-residue protein sequence, read N- to C-terminus: 3-octaprenyl-4-hydroxybenzoate carboxy-lyase (491 aa).

Asn-176 contacts Mn(2+). Residues 179-181 (IYR), 193-195 (RWL), and 198-199 (RG) contribute to the prenylated FMN site. Glu-242 is a Mn(2+) binding site. Residue Asp-291 is the Proton donor of the active site.

Belongs to the UbiD family. Homohexamer. Requires prenylated FMN as cofactor. It depends on Mn(2+) as a cofactor.

It localises to the cell membrane. The enzyme catalyses a 4-hydroxy-3-(all-trans-polyprenyl)benzoate + H(+) = a 2-(all-trans-polyprenyl)phenol + CO2. Its pathway is cofactor biosynthesis; ubiquinone biosynthesis. Its function is as follows. Catalyzes the decarboxylation of 3-octaprenyl-4-hydroxy benzoate to 2-octaprenylphenol, an intermediate step in ubiquinone biosynthesis. The sequence is that of 3-octaprenyl-4-hydroxybenzoate carboxy-lyase from Chromobacterium violaceum (strain ATCC 12472 / DSM 30191 / JCM 1249 / CCUG 213 / NBRC 12614 / NCIMB 9131 / NCTC 9757 / MK).